The primary structure comprises 1306 residues: Angiotensin-converting enzyme (1306 aa).

Positions 1–28 (MGAASGRRSPPLLLPLLLLLLPPPPVIL) are cleaved as a signal peptide. Topologically, residues 29–1256 (ELDPALQPGN…GLNLEEQQAR (1228 aa)) are extracellular. Peptidase M2 domains are found at residues 40 to 624 (PADE…LGWP) and 643 to 1222 (VSDE…LGWP). N-linked (GlcNAc...) asparagine glycosylation is found at Asn54, Asn74, Asn111, Asn146, and Asn160. Cysteines 157 and 165 form a disulfide. Tyr231 serves as a coordination point for chloride. Asn318 carries N-linked (GlcNAc...) asparagine glycosylation. An intrachain disulfide couples Cys359 to Cys377. Residue His390 participates in Zn(2+) binding. Glu391 (proton acceptor 1) is an active-site residue. Positions 394 and 418 each coordinate Zn(2+). Asn445 and Asn509 each carry an N-linked (GlcNAc...) asparagine glycan. The active-site Proton donor 1 is the His520. Asn523 carries an N-linked (GlcNAc...) asparagine glycan. Arg529 is a chloride binding site. A disulfide bridge connects residues Cys545 and Cys557. Asn673, Asn695, Asn714, and Asn760 each carry an N-linked (GlcNAc...) asparagine glycan. Cys757 and Cys763 are oxidised to a cystine. Chloride-binding residues include Arg791 and Tyr829. N-linked (GlcNAc...) asparagine glycosylation is present at Asn942. Cys957 and Cys975 are oxidised to a cystine. His988 is a binding site for Zn(2+). Glu989 serves as the catalytic Proton acceptor 2. Zn(2+)-binding residues include His992 and Glu1016. Residues Trp1090 and Arg1094 each contribute to the chloride site. Catalysis depends on His1118, which acts as the Proton donor 2. A chloride-binding site is contributed by Arg1127. A disulfide bridge links Cys1143 with Cys1155. 2 N-linked (GlcNAc...) asparagine glycosylation sites follow: Asn1191 and Asn1225. Positions 1215–1256 (HGEKLGWPQYNWTPNSARLEGPFVGSGRVNFLGLNLEEQQAR) are juxtamembrane stalk. Residues 1257–1277 (VGQWVLLFLGVALLVATLGLT) traverse the membrane as a helical segment. Residues 1278–1306 (QRLFSIRHHSLRRPHRGPQFGSEVELRHS) lie on the Cytoplasmic side of the membrane. Ser1299 is modified (phosphoserine).

This sequence belongs to the peptidase M2 family. Monomer and homodimer; homodimerizes following binding to an inhibitor. Interacts with calmodulin (CALM1, CALM2 or CALM3); interaction takes place in the cytoplasmic region and regulates phosphorylation and proteolytic cleavage. The cofactor is Zn(2+). Requires chloride as cofactor. Produced following proteolytic cleavage by secretase enzymes that cleave the transmembrane form in the juxtamembrane stalk region upstream of the transmembrane region. Cleavage can take place at different sites of the juxtamembrane stalk region. In terms of processing, phosphorylated by CK2 on Ser-1299; which allows membrane retention. Phosphorylated on tyrosine residues on its extracellular part, promoting cleavage by secretase enzymes and formation of the soluble form (Angiotensin-converting enzyme, soluble form).

The protein localises to the cell membrane. It is found in the cytoplasm. Its subcellular location is the secreted. The catalysed reaction is Release of a C-terminal dipeptide, oligopeptide-|-Xaa-Yaa, when Xaa is not Pro, and Yaa is neither Asp nor Glu. Thus, conversion of angiotensin I to angiotensin II, with increase in vasoconstrictor activity, but no action on angiotensin II.. It carries out the reaction angiotensin I + H2O = L-histidyl-L-leucine + angiotensin II. It catalyses the reaction bradykinin + H2O = L-Phe-L-Arg + bradykinin(1-7). The enzyme catalyses substance P + H2O = substance P(1-9) + L-Leu-L-Met-NH2. The catalysed reaction is substance P + H2O = substance P(1-8) + Gly-L-Leu-L-Met-NH2. It carries out the reaction substance P + H2O = L-Phe-L-Phe-Gly-L-Leu-L-Met-NH2 + substance P(1-6). It catalyses the reaction neurotensin + H2O = neurotensin(1-11) + L-isoleucyl-L-leucine. The enzyme catalyses goralatide + H2O = N-acetyl-L-seryl-L-aspartate + L-lysyl-L-proline. The catalysed reaction is Met-enkephalin + H2O = L-phenylalanyl-L-methionine + L-tyrosylglycylglycine. It carries out the reaction Leu-enkephalin + H2O = L-tyrosylglycylglycine + L-phenylalanyl-L-leucine. It catalyses the reaction Met-enkephalin-Arg-Phe + H2O = L-arginyl-L-phenylalanine + Met-enkephalin. Its activity is regulated as follows. The dipeptidyl carboxypeptidase activity is strongly activated by chloride. The dipeptidyl carboxypeptidase activity is specifically inhibited by lisinopril, captopril and enalaprilat. In terms of biological role, dipeptidyl carboxypeptidase that removes dipeptides from the C-terminus of a variety of circulating hormones, such as angiotensin I, bradykinin or enkephalins, thereby playing a key role in the regulation of blood pressure, electrolyte homeostasis or synaptic plasticity. Composed of two similar catalytic domains, each possessing a functional active site, with different selectivity for substrates. Plays a major role in the angiotensin-renin system that regulates blood pressure and sodium retention by the kidney by converting angiotensin I to angiotensin II, resulting in an increase of the vasoconstrictor activity of angiotensin. Also able to inactivate bradykinin, a potent vasodilator, and therefore enhance the blood pressure response. Acts as a regulator of synaptic transmission by mediating cleavage of neuropeptide hormones, such as substance P, neurotensin or enkephalins. Catalyzes degradation of different enkephalin neuropeptides (Met-enkephalin, Leu-enkephalin, Met-enkephalin-Arg-Phe and possibly Met-enkephalin-Arg-Gly-Leu). Acts as a regulator of synaptic plasticity in the nucleus accumbens of the brain by mediating cleavage of Met-enkephalin-Arg-Phe, a strong ligand of Mu-type opioid receptor OPRM1, into Met-enkephalin. Met-enkephalin-Arg-Phe cleavage by ACE decreases activation of OPRM1, leading to long-term synaptic potentiation of glutamate release. Also acts as a regulator of hematopoietic stem cell differentiation by mediating degradation of hemoregulatory peptide N-acetyl-SDKP (AcSDKP). Acts as a regulator of cannabinoid signaling pathway by mediating degradation of hemopressin, an antagonist peptide of the cannabinoid receptor CNR1. Involved in amyloid-beta metabolism by catalyzing degradation of Amyloid-beta protein 40 and Amyloid-beta protein 42 peptides, thereby preventing plaque formation. Catalyzes cleavage of cholecystokinin (maturation of Cholecystokinin-8 and Cholecystokinin-5) and Gonadoliberin-1 (both maturation and degradation) hormones. Degradation of hemoregulatory peptide N-acetyl-SDKP (AcSDKP) and amyloid-beta proteins is mediated by the N-terminal catalytic domain, while angiotensin I and cholecystokinin cleavage is mediated by the C-terminal catalytic region. Functionally, soluble form that is released in blood plasma and other body fluids following proteolytic cleavage in the juxtamembrane stalk region. The polypeptide is Angiotensin-converting enzyme (Bos taurus (Bovine)).